Consider the following 149-residue polypeptide: Large ribosomal subunit protein bL9 (149 aa).

The protein belongs to the bacterial ribosomal protein bL9 family.

Binds to the 23S rRNA. The chain is Large ribosomal subunit protein bL9 from Chromobacterium violaceum (strain ATCC 12472 / DSM 30191 / JCM 1249 / CCUG 213 / NBRC 12614 / NCIMB 9131 / NCTC 9757 / MK).